Here is a 501-residue protein sequence, read N- to C-terminus: Glutamate--tRNA ligase (501 aa).

The 'HIGH' region motif lies at 21 to 31; the sequence is PSPTGTPHVGL. The 'KMSKS' region motif lies at 266-270; sequence KLSKR. Position 269 (Lys-269) interacts with ATP.

Belongs to the class-I aminoacyl-tRNA synthetase family. Glutamate--tRNA ligase type 1 subfamily. As to quaternary structure, monomer.

The protein resides in the cytoplasm. The catalysed reaction is tRNA(Glu) + L-glutamate + ATP = L-glutamyl-tRNA(Glu) + AMP + diphosphate. In terms of biological role, catalyzes the attachment of glutamate to tRNA(Glu) in a two-step reaction: glutamate is first activated by ATP to form Glu-AMP and then transferred to the acceptor end of tRNA(Glu). The chain is Glutamate--tRNA ligase from Kineococcus radiotolerans (strain ATCC BAA-149 / DSM 14245 / SRS30216).